The sequence spans 147 residues: Mediator of RNA polymerase II transcription subunit 10 (147 aa).

This sequence belongs to the Mediator complex subunit 10 family. In terms of assembly, component of the Mediator complex.

The protein localises to the nucleus. In terms of biological role, component of the Mediator complex, a coactivator involved in the regulated transcription of nearly all RNA polymerase II-dependent genes. Mediator functions as a bridge to convey information from gene-specific regulatory proteins to the basal RNA polymerase II transcription machinery. Mediator is recruited to promoters by direct interactions with regulatory proteins and serves as a scaffold for the assembly of a functional preinitiation complex with RNA polymerase II and the general transcription factors. The sequence is that of Mediator of RNA polymerase II transcription subunit 10 (NUT2) from Debaryomyces hansenii (strain ATCC 36239 / CBS 767 / BCRC 21394 / JCM 1990 / NBRC 0083 / IGC 2968) (Yeast).